The following is a 139-amino-acid chain: MATMQCDVVSVKESLYSGAVTMLIAKGAGGELGILPGHAPLVTLLQLGPIRVLLENGTEEIVYVSGGVLEVQPHVVTVLADTAIRADNLDEAAILEARKNAEQLLANQKSDLDSAAALAALAETAAQLETIRKIKNRAQ.

This sequence belongs to the ATPase epsilon chain family. In terms of assembly, F-type ATPases have 2 components, CF(1) - the catalytic core - and CF(0) - the membrane proton channel. CF(1) has five subunits: alpha(3), beta(3), gamma(1), delta(1), epsilon(1). CF(0) has three main subunits: a, b and c.

It is found in the cell inner membrane. Produces ATP from ADP in the presence of a proton gradient across the membrane. The protein is ATP synthase epsilon chain of Acinetobacter baumannii (strain SDF).